Reading from the N-terminus, the 2193-residue chain is Genome polyprotein (2193 aa).

The segment at 1-22 (MGSQVSTQRSGSHENSNSATEG) is disordered. The N-myristoyl glycine; by host moiety is linked to residue Gly2. Residues 2-1503 (GSQVSTQRSG…HLNRAVLVMQ (1502 aa)) lie on the Cytoplasmic side of the membrane. 2 amphipathic alpha-helix regions span residues 566-588 (GDRV…LTPA) and 568-588 (RVAD…LTPA). Active-site for protease 2A activity residues include His883 and Asp901. Zn(2+) contacts are provided by Cys918 and Cys920. Residue Cys972 is the For protease 2A activity of the active site. Cys978 and His980 together coordinate Zn(2+). The tract at residues 1112–1184 (SASWLKKFND…EQSAASQEDL (73 aa)) is membrane-binding. Residues 1112 to 1250 (SASWLKKFND…SPGTGKSLAT (139 aa)) form an oligomerization region. The segment at 1133–1137 (FNKIS) is RNA-binding. The SF3 helicase domain maps to 1216–1374 (EKRMNNYMQF…YKTDLGRLDA (159 aa)). 1240–1247 (GSPGTGKS) provides a ligand contact to ATP. Positions 1381, 1392, and 1397 each coordinate Zn(2+). The segment at 1381–1397 (CTENNTANFKRCSPLVC) adopts a C4-type; degenerate zinc-finger fold. Residues 1424 to 1431 (EYNNRSAI) are RNA-binding. The segment at 1435 to 1440 (IEALFQ) is oligomerization. The stretch at 1504–1519 (SIATVVAVVSLVYVIY) is an intramembrane region. Residues 1520 to 2193 (KLFAGFQGAY…NLRRNWLELF (674 aa)) lie on the Cytoplasmic side of the membrane. At Tyr1529 the chain carries O-(5'-phospho-RNA)-tyrosine. Residues 1549–1727 (GPSLDFALSL…FCAGLKRSYF (179 aa)) enclose the Peptidase C3 domain. Catalysis depends on for protease 3C activity residues His1588, Glu1619, and Cys1695. Residues 1958–2073 (GSLFAFDYSG…ASYPFPIDCL (116 aa)) form the RdRp catalytic domain. Positions 1964 and 2060 each coordinate Mg(2+).

The protein belongs to the picornaviruses polyprotein family. As to quaternary structure, interacts with capsid protein VP1 and capsid protein VP3 to form heterotrimeric protomers. In terms of assembly, interacts with capsid protein VP0, and capsid protein VP3 to form heterotrimeric protomers. Five protomers subsequently associate to form pentamers which serve as building blocks for the capsid. Interacts with capsid protein VP2, capsid protein VP3 and capsid protein VP4 following cleavage of capsid protein VP0. Interacts with host SCARB2. Interacts with host ARF6; this interaction mediates viral endocytosis. Interacts with capsid protein VP1 and capsid protein VP3 in the mature capsid. Interacts with host SCARB2. As to quaternary structure, interacts with capsid protein VP0 and capsid protein VP1 to form heterotrimeric protomers. Five protomers subsequently associate to form pentamers which serve as building blocks for the capsid. Interacts with capsid protein VP4 in the mature capsid. Interacts with protein 2C; this interaction may be important for virion morphogenesis. In terms of assembly, interacts with capsid protein VP1 and capsid protein VP3. Homodimer. Interacts with host SPOP; this interaction promotes protease 2A ubiquitination and subsequent degradation. As to quaternary structure, interacts with host BAX; this interaction activates the mitochondrial apoptotic pathway. Interacts with host ILF2. In terms of assembly, homohexamer; forms a hexameric ring structure with 6-fold symmetry characteristic of AAA+ ATPases. Interacts (via N-terminus) with host RTN3 (via reticulon domain); this interaction is important for viral replication. Interacts with capsid protein VP3; this interaction may be important for virion morphogenesis. Interacts with protein 3CD. As to quaternary structure, homodimer. Interacts with host GBF1. Interacts (via GOLD domain) with host ACBD3 (via GOLD domain); this interaction allows the formation of a viral protein 3A/ACBD3 heterotetramer with a 2:2 stoichiometry, which will stimulate the recruitment of host PI4KB in order to synthesize PI4P at the viral RNA replication sites. In terms of assembly, interacts with RNA-directed RNA polymerase. Interacts with host IFIH1/MDA5; this interaction inhibits host IFIH1. Interacts with host RIGI. As to quaternary structure, interacts with protein 3AB and with RNA-directed RNA polymerase. Interacts with host PPP1R15A. In terms of assembly, interacts with Viral protein genome-linked and with protein 3CD. Interacts with host NLRP3. It depends on Mg(2+) as a cofactor. Specific enzymatic cleavages in vivo by the viral proteases yield processing intermediates and the mature proteins. In terms of processing, myristoylation is required for the formation of pentamers during virus assembly. Further assembly of 12 pentamers and a molecule of genomic RNA generates the provirion. Post-translationally, during virion maturation, immature virions are rendered infectious following cleavage of VP0 into VP4 and VP2. This maturation seems to be an autocatalytic event triggered by the presence of RNA in the capsid and it is followed by a conformational change infectious virion. Myristoylation is required during RNA encapsidation and formation of the mature virus particle. In terms of processing, VPg is uridylylated by the polymerase into VPg-pUpU. This acts as a nucleotide-peptide primer for the genomic RNA replication.

Its subcellular location is the virion. The protein resides in the host cytoplasm. It is found in the host cytoplasmic vesicle membrane. It localises to the host nucleus. It carries out the reaction a ribonucleoside 5'-triphosphate + H2O = a ribonucleoside 5'-diphosphate + phosphate + H(+). The catalysed reaction is Selective cleavage of Tyr-|-Gly bond in the picornavirus polyprotein.. It catalyses the reaction RNA(n) + a ribonucleoside 5'-triphosphate = RNA(n+1) + diphosphate. The enzyme catalyses Selective cleavage of Gln-|-Gly bond in the poliovirus polyprotein. In other picornavirus reactions Glu may be substituted for Gln, and Ser or Thr for Gly.. Its activity is regulated as follows. Replication or transcription is subject to high level of random mutations by the nucleotide analog ribavirin. Forms an icosahedral capsid of pseudo T=3 symmetry with capsid proteins VP2 and VP3. The capsid is 300 Angstroms in diameter, composed of 60 copies of each capsid protein and enclosing the viral positive strand RNA genome. Capsid protein VP1 mainly forms the vertices of the capsid. Capsid protein VP1, together with VP2, interacts with host cell receptor SCARB2 to provide virion attachment to target host cells. This attachment induces virion internalization predominantly through clathrin-dependent endocytosis. After binding to its receptor, the capsid undergoes conformational changes. Capsid protein VP1 N-terminus (that contains an amphipathic alpha-helix) and capsid protein VP4 are externalized. Together, they shape a pore in the host membrane through which viral genome is translocated to host cell cytoplasm. Its function is as follows. Forms an icosahedral capsid of pseudo T=3 symmetry with capsid proteins VP2 and VP3. The capsid is 300 Angstroms in diameter, composed of 60 copies of each capsid protein and enclosing the viral positive strand RNA genome. Capsid protein VP2, together with VP1, interacts with host cell receptor SCARB2 to provide virion attachment to target host cells. Functionally, forms an icosahedral capsid of pseudo T=3 symmetry with capsid proteins VP2 and VP3. The capsid is 300 Angstroms in diameter, composed of 60 copies of each capsid protein and enclosing the viral positive strand RNA genome. In terms of biological role, lies on the inner surface of the capsid shell. After binding to the host receptor, the capsid undergoes conformational changes. Capsid protein VP4 is released, Capsid protein VP1 N-terminus is externalized, and together, they shape a pore in the host membrane through which the viral genome is translocated into the host cell cytoplasm. Component of immature procapsids, which is cleaved into capsid proteins VP4 and VP2 after maturation. Allows the capsid to remain inactive before the maturation step. Its function is as follows. Cysteine protease that cleaves viral polyprotein and specific host proteins. It is responsible for the autocatalytic cleavage between the P1 and P2 regions, which is the first cleavage occurring in the polyprotein. Also cleaves the host translation initiation factor EIF4G1, in order to shut down the capped cellular mRNA translation. Inhibits the host nucleus-cytoplasm protein and RNA trafficking by cleaving host members of the nuclear pores. Counteracts stress granule formation probably by antagonizing its assembly or promoting its dissassembly. Cleaves and inhibits host IFIH1/MDA5, thereby inhibiting the type-I IFN production and the establishment of the antiviral state. Cleaves and inhibits host MAVS, thereby inhibiting the type-I IFN production and the establishment of the antiviral state. Functionally, plays an essential role in the virus replication cycle by acting as a viroporin. Creates a pore in the host endoplasmic reticulum and as a consequence releases Ca2+ in the cytoplasm of infected cell. In turn, high levels of cytoplasmic calcium may trigger membrane trafficking and transport of viral ER-associated proteins to viroplasms, sites of viral genome replication. Also activates the mitochondrial apoptotic pathway by activating host BAX. In terms of biological role, induces and associates with structural rearrangements of intracellular membranes. Displays RNA-binding, nucleotide binding and NTPase activities. May play a role in virion morphogenesis and viral RNA encapsidation by interacting with the capsid protein VP3. Localizes the viral replication complex to the surface of membranous vesicles. Together with protein 3CD binds the Cis-Active RNA Element (CRE) which is involved in RNA synthesis initiation. Acts as a cofactor to stimulate the activity of 3D polymerase, maybe through a nucleid acid chaperone activity. Its function is as follows. Localizes the viral replication complex to the surface of membranous vesicles. It inhibits host cell endoplasmic reticulum-to-Golgi apparatus transport and causes the disassembly of the Golgi complex, possibly through GBF1 interaction. This would result in depletion of MHC, trail receptors and IFN receptors at the host cell surface. Plays an essential role in viral RNA replication by recruiting ACBD3 and PI4KB at the viral replication sites, thereby allowing the formation of the rearranged membranous structures where viral replication takes place. Functionally, acts as a primer for viral RNA replication and remains covalently bound to viral genomic RNA. VPg is uridylylated prior to priming replication into VPg-pUpU. The oriI viral genomic sequence may act as a template for this. The VPg-pUpU is then used as primer on the genomic RNA poly(A) by the RNA-dependent RNA polymerase to replicate the viral genome. During genome replication, the VPg-RNA linkage is removed by the host TDP2, thereby accelerating replication. During the late stage of the replication cycle, host TDP2 is excluded from sites of viral RNA synthesis and encapsidation, allowing for the generation of progeny virions. In terms of biological role, involved in the viral replication complex and viral polypeptide maturation. It exhibits protease activity with a specificity and catalytic efficiency that is different from protease 3C. Protein 3CD lacks polymerase activity. Protein 3CD binds to the 5'UTR of the viral genome. Regulates host protein expression by interacting with host PPP1R15A to support viral replication. Major viral protease that mediates proteolytic processing of the polyprotein. Cleaves host EIF5B, contributing to host translation shutoff. Also cleaves host PABPC1, contributing to host translation shutoff. Disassembles host cytoplasmic stress granules by cleaving host G3BP1, although this effect is less prononced than the inhibition induced by protease 2A. Cleaves host RIGI and thus contributes to the inhibition of type I interferon production. Cleaves host IRF7 and thus contributes to the inhibition of type I interferon production. Cleaves host HNRNPA1 thereby increasing the translation of apoptosis protease activating factor APAF1, leading to apoptosis of the host cell. Cleaves host NLRP1, triggers host N-glycine-mediated degradation of the autoinhibitory NLRP1 N-terminal fragment. Cleaves and inactivates host GSDMD, preventing GSDMD-mediated pyroptosis. Also promotes apoptosis in infected cell through cleaving of host PINX1, a telomere binding protein in order to facilitate viral release. Impairs host PML-NBs production via PML cleavage and counter its antiviral activities. Its function is as follows. Replicates the viral genomic RNA on the surface of intracellular membranes. May form linear arrays of subunits that propagate along a strong head-to-tail interaction called interface-I. Covalently attaches UMP to a tyrosine of VPg, which is used to prime RNA synthesis. The positive stranded RNA genome is first replicated at virus induced membranous vesicles, creating a dsRNA genomic replication form. This dsRNA is then used as template to synthesize positive stranded RNA genomes. ss(+)RNA genomes are either translated, replicated or encapsidated. Facilitates the assembly of NLRP3 inflammasome complex and stimulates the cleavage of host pro-CASP1 and the secretion of IL-1beta. This is Genome polyprotein from Human enterovirus 71 (strain USA/BrCr/1970) (EV71).